The chain runs to 287 residues: S-methyl-5'-thioadenosine phosphorylase (287 aa).

Phosphate is bound by residues threonine 13 and 55–56; that span reads RH. Residue methionine 186 coordinates substrate. Threonine 187 contributes to the phosphate binding site. 210 to 212 provides a ligand contact to substrate; that stretch reads DYD.

It belongs to the PNP/MTAP phosphorylase family. MTAP subfamily. In terms of assembly, homohexamer. Dimer of a homotrimer.

It carries out the reaction S-methyl-5'-thioadenosine + phosphate = 5-(methylsulfanyl)-alpha-D-ribose 1-phosphate + adenine. It functions in the pathway amino-acid biosynthesis; L-methionine biosynthesis via salvage pathway; S-methyl-5-thio-alpha-D-ribose 1-phosphate from S-methyl-5'-thioadenosine (phosphorylase route): step 1/1. Functionally, catalyzes the reversible phosphorylation of S-methyl-5'-thioadenosine (MTA) to adenine and 5-methylthioribose-1-phosphate. Involved in the breakdown of MTA, a major by-product of polyamine biosynthesis. Responsible for the first step in the methionine salvage pathway after MTA has been generated from S-adenosylmethionine. Has broad substrate specificity with 6-aminopurine nucleosides as preferred substrates. The chain is S-methyl-5'-thioadenosine phosphorylase from Leptospira interrogans serogroup Icterohaemorrhagiae serovar copenhageni (strain Fiocruz L1-130).